Here is a 610-residue protein sequence, read N- to C-terminus: UvrABC system protein C (610 aa).

Residues 16-94 (SQPGVYRMYD…IKLYQPRYNV (79 aa)) enclose the GIY-YIG domain. The region spanning 204–239 (DQVLTQLIARMEKASQDLAFEEAARIRDQIQAVRRV) is the UVR domain.

It belongs to the UvrC family. As to quaternary structure, interacts with UvrB in an incision complex.

The protein resides in the cytoplasm. In terms of biological role, the UvrABC repair system catalyzes the recognition and processing of DNA lesions. UvrC both incises the 5' and 3' sides of the lesion. The N-terminal half is responsible for the 3' incision and the C-terminal half is responsible for the 5' incision. The chain is UvrABC system protein C from Salmonella paratyphi A (strain ATCC 9150 / SARB42).